Reading from the N-terminus, the 284-residue chain is 4-hydroxybenzoate octaprenyltransferase (284 aa).

Helical transmembrane passes span 16–36, 40–60, 91–111, 132–152, 157–177, 206–226, 231–251, and 259–279; these read PIGI…ASDG, WTLL…GCAI, LLVA…LNTL, FFAI…PMGF, NTVP…AVAY, VAAV…VGWQ, TWFA…YTLI, and CFAA…GVVL.

Belongs to the UbiA prenyltransferase family. Requires Mg(2+) as cofactor.

The protein resides in the cell inner membrane. The enzyme catalyses all-trans-octaprenyl diphosphate + 4-hydroxybenzoate = 4-hydroxy-3-(all-trans-octaprenyl)benzoate + diphosphate. It participates in cofactor biosynthesis; ubiquinone biosynthesis. Functionally, catalyzes the prenylation of para-hydroxybenzoate (PHB) with an all-trans polyprenyl group. Mediates the second step in the final reaction sequence of ubiquinone-8 (UQ-8) biosynthesis, which is the condensation of the polyisoprenoid side chain with PHB, generating the first membrane-bound Q intermediate 3-octaprenyl-4-hydroxybenzoate. This is 4-hydroxybenzoate octaprenyltransferase from Herminiimonas arsenicoxydans.